Consider the following 542-residue polypeptide: CTP synthase (542 aa).

An amidoligase domain region spans residues 1-265 (MARYVFITGG…DSEVLCAFGI (265 aa)). Residue S13 coordinates CTP. Residue S13 participates in UTP binding. 14–19 (SLGKGI) contributes to the ATP binding site. Y54 lines the L-glutamine pocket. Residue D71 coordinates ATP. D71 and E139 together coordinate Mg(2+). CTP is bound by residues 146–148 (DIE), 186–191 (KTKPTQ), and K222. Residues 186–191 (KTKPTQ) and K222 each bind UTP. One can recognise a Glutamine amidotransferase type-1 domain in the interval 291-541 (TIAVVGKYTG…IEAAVEQSRL (251 aa)). A353 contributes to the L-glutamine binding site. Residue C380 is the Nucleophile; for glutamine hydrolysis of the active site. L-glutamine-binding positions include 381–384 (FGMQ), E404, and R469. Active-site residues include H514 and E516.

Belongs to the CTP synthase family. Homotetramer.

The enzyme catalyses UTP + L-glutamine + ATP + H2O = CTP + L-glutamate + ADP + phosphate + 2 H(+). The catalysed reaction is L-glutamine + H2O = L-glutamate + NH4(+). It carries out the reaction UTP + NH4(+) + ATP = CTP + ADP + phosphate + 2 H(+). It participates in pyrimidine metabolism; CTP biosynthesis via de novo pathway; CTP from UDP: step 2/2. With respect to regulation, allosterically activated by GTP, when glutamine is the substrate; GTP has no effect on the reaction when ammonia is the substrate. The allosteric effector GTP functions by stabilizing the protein conformation that binds the tetrahedral intermediate(s) formed during glutamine hydrolysis. Inhibited by the product CTP, via allosteric rather than competitive inhibition. Catalyzes the ATP-dependent amination of UTP to CTP with either L-glutamine or ammonia as the source of nitrogen. Regulates intracellular CTP levels through interactions with the four ribonucleotide triphosphates. In Bartonella tribocorum (strain CIP 105476 / IBS 506), this protein is CTP synthase.